The primary structure comprises 424 residues: Serpin-Z2A (424 aa).

Residues 370 to 394 (GTEAAASTACTIRLLSMSYPEDFVA) form an RCL region.

It belongs to the serpin family.

Functionally, probable serine protease inhibitor. The protein is Serpin-Z2A of Oryza sativa subsp. japonica (Rice).